The sequence spans 908 residues: DNA mismatch repair protein MutS (908 aa).

Residue 662–669 participates in ATP binding; the sequence is GPNMGGKS.

It belongs to the DNA mismatch repair MutS family.

Functionally, this protein is involved in the repair of mismatches in DNA. It is possible that it carries out the mismatch recognition step. This protein has a weak ATPase activity. The protein is DNA mismatch repair protein MutS of Rhizobium etli (strain ATCC 51251 / DSM 11541 / JCM 21823 / NBRC 15573 / CFN 42).